The following is a 429-amino-acid chain: Glutamate-1-semialdehyde 2,1-aminomutase 2 (429 aa).

Position 268 is an N6-(pyridoxal phosphate)lysine (lysine 268).

This sequence belongs to the class-III pyridoxal-phosphate-dependent aminotransferase family. HemL subfamily. Homodimer. Pyridoxal 5'-phosphate serves as cofactor.

Its subcellular location is the cytoplasm. It carries out the reaction (S)-4-amino-5-oxopentanoate = 5-aminolevulinate. It functions in the pathway porphyrin-containing compound metabolism; protoporphyrin-IX biosynthesis; 5-aminolevulinate from L-glutamyl-tRNA(Glu): step 2/2. This chain is Glutamate-1-semialdehyde 2,1-aminomutase 2, found in Staphylococcus aureus (strain MRSA252).